A 410-amino-acid polypeptide reads, in one-letter code: Translation initiation factor 2 subunit gamma (410 aa).

In terms of domain architecture, tr-type G spans 6-203 (QSEVNIGMVG…AIQEFIPTPK (198 aa)). Positions 15 to 22 (GHVDHGKT) are G1. Mg(2+) contacts are provided by Asp18, Thr22, Gly43, and Ser45. 18 to 23 (DHGKTS) is a binding site for GTP. The interval 43-47 (GISIR) is G2. Residues Cys58, Cys61, Cys73, and Cys76 each contribute to the Zn(2+) site. Residues 90–93 (DAPG) form a G3 region. Residues 146-149 (NKID) and 181-183 (SAH) contribute to the GTP site. Residues 146–149 (NKID) are G4. Residues 181–183 (SAH) form a G5 region.

Belongs to the TRAFAC class translation factor GTPase superfamily. Classic translation factor GTPase family. EIF2G subfamily. In terms of assembly, heterotrimer composed of an alpha, a beta and a gamma chain. Mg(2+) is required as a cofactor.

It catalyses the reaction GTP + H2O = GDP + phosphate + H(+). Functionally, eIF-2 functions in the early steps of protein synthesis by forming a ternary complex with GTP and initiator tRNA. The protein is Translation initiation factor 2 subunit gamma of Methanococcus vannielii (strain ATCC 35089 / DSM 1224 / JCM 13029 / OCM 148 / SB).